A 466-amino-acid chain; its full sequence is GTPase Der (466 aa).

2 consecutive EngA-type G domains span residues 30 to 193 (PVVA…PEVS) and 203 to 376 (RRVA…ASWD). GTP is bound by residues 36-43 (GRPNVGKS), 83-87 (DTGGW), 145-148 (NKVD), 209-216 (GKPNVGKS), 256-260 (DTAGL), and 321-324 (NKWD). In terms of domain architecture, KH-like spans 377–459 (TRIATGPLNS…PIRINVRVRE (83 aa)).

Belongs to the TRAFAC class TrmE-Era-EngA-EngB-Septin-like GTPase superfamily. EngA (Der) GTPase family. In terms of assembly, associates with the 50S ribosomal subunit.

In terms of biological role, GTPase that plays an essential role in the late steps of ribosome biogenesis. The protein is GTPase Der of Mycolicibacterium paratuberculosis (strain ATCC BAA-968 / K-10) (Mycobacterium paratuberculosis).